A 390-amino-acid chain; its full sequence is Homoserine O-acetyltransferase (390 aa).

One can recognise an AB hydrolase-1 domain in the interval 55-366 (NAILINHAFS…ESDCGHDAFL (312 aa)). The active-site Nucleophile is the Ser163. Arg232 contacts substrate. Catalysis depends on residues Asp329 and His362. A substrate-binding site is contributed by Asp363.

It belongs to the AB hydrolase superfamily. MetX family. In terms of assembly, homodimer.

It is found in the cytoplasm. It carries out the reaction L-homoserine + acetyl-CoA = O-acetyl-L-homoserine + CoA. Its pathway is amino-acid biosynthesis; L-methionine biosynthesis via de novo pathway; O-acetyl-L-homoserine from L-homoserine: step 1/1. In terms of biological role, transfers an acetyl group from acetyl-CoA to L-homoserine, forming acetyl-L-homoserine. In Desulfotalea psychrophila (strain LSv54 / DSM 12343), this protein is Homoserine O-acetyltransferase.